Consider the following 151-residue polypeptide: Small ribosomal subunit protein uS19 (151 aa).

N-acetylalanine is present on A2.

This sequence belongs to the universal ribosomal protein uS19 family.

Functionally, negatively regulates lifespan. The sequence is that of Small ribosomal subunit protein uS19 from Caenorhabditis elegans.